The primary structure comprises 384 residues: Protein V (384 aa).

Disordered regions lie at residues 1–23 and 38–317; these read MDQD…GGRE and SEPT…TKKG. Basic and acidic residues predominate over residues 7-20; the sequence is ILKEDSEVEREAPG. A compositionally biased stretch (polar residues) spans 50–59; sequence LHNTINTPQG. Ser68 carries the post-translational modification Phosphoserine; by host. Basic and acidic residues predominate over residues 83-101; it reads RSGEESRVSGRTSKPEAEA. Residue Ser125 is modified to Phosphoserine; by host. Positions 150–168 are enriched in basic and acidic residues; sequence GIEDENREMAAHPDKRGED. The span at 191 to 206 shows a compositional bias: polar residues; that stretch reads ASNNGRSMEPGSSHSA. Residues Ser192, Ser249, Ser257, and Ser260 each carry the phosphoserine; by host modification. The Zn(2+) site is built by His318, Cys337, Cys341, Cys353, Cys355, Cys358, Cys362, and Cys365.

Belongs to the paramyxoviruses V protein family. Interacts with host IFIH1/MDA5 and DHX58/LGP2. Interacts with host IRF3. Interacts with host RIGI regulatory protein (via CARDs domain) and host TRIM25 (via SPRY domain); these interactions prevent TRIM25-mediated ubiquitination of RIG-I and disrupts downstream RIG-I signaling.

The protein localises to the host cytoplasm. In terms of biological role, plays an essential role in the inhibition of host immune response. Prevents the establishment of cellular antiviral state by blocking interferon-alpha/beta (IFN-alpha/beta) production and signaling pathway. Interacts with host IFIH1/MDA5 and DHX58/LGP2 to inhibit the transduction pathway involved in the activation of IFN-beta promoter, thus protecting the virus against cell antiviral state. Also interacts with and inhibits host IRF3. Blocks the type I interferon signaling pathway by disrupting the RIG-I signaling pathway. This is Protein V (P/V/C) from Sendai virus (strain Z) (SeV).